Consider the following 462-residue polypeptide: MRCFRWWLYSGWWWLTFGCARTVTVGFVAPTVRAQSTVVRSEPAPPSETRRDNNDTSYFSSTSFHSSVSPATSVDRQFRRTTYDRWDGRRWLRTRYGNASACVTGTQWSTNFFFSQCEHYPSFVKLNGVQRWTPVRRPMGEVAYYGGCCMVGGGNRAYVILVSGYGTASYGNALRVDFGRGNCTAPKRTYPRRLELHDGRTDPSRCDPYQVYFYGLQCPEQLVITAHGGVGMRRCPTGSRPTPSRPHRHDLENELHGLCVDLLVCVLLLALLLLELVPMEAVRHPLLFWRRVALSPSTSKVDRAVKLCLRRMLGLPPPPSVAPPGEKKELPAQAALSPPLTTWSLPPFPSTRIPDSPPPPYQLRHATSLVTVPTLLLYTSSDIGDTASETTCVAHATYGEPPEPARSTATVQECTVLTAPNCGIVNNDGAVSEGQDHGDAVHHSLDVVSQCAADTGVVDTSE.

The next 2 helical transmembrane spans lie at 12–32 and 257–277; these read WWWLTFGCARTVTVGFVAPTV and GLCVDLLVCVLLLALLLLELV.

The protein belongs to the HHV-5 US29 protein family.

It localises to the host membrane. This is an uncharacterized protein from Homo sapiens (Human).